Here is a 214-residue protein sequence, read N- to C-terminus: Calcineurin B homologous protein 3 (214 aa).

The tract at residues 1–20 is disordered; it reads MGAAHSASEEVRELEGKTGF. The N-myristoyl glycine moiety is linked to residue Gly2. Basic and acidic residues predominate over residues 7-16; that stretch reads ASEEVRELEG. An EF-hand domain is found at 110–145; sequence SRKEKLRFLFHMYDSDSDGRITLEEYRNVVEELLSG. Asp123, Asp125, Asp127, Arg129, and Glu134 together coordinate Ca(2+).

It belongs to the calcineurin regulatory subunit family. CHP subfamily. In terms of assembly, monomer. Homodimer; disulfide-linked. Interacts with SLC9A1/NHE1; the interaction enables an optimal Na(+)/H(+) exchange activity. In terms of tissue distribution, expressed in mature megakaryocytes and polymorphonuclear granulocytes (at protein level). Abundantly expressed in heart. Also expressed at a lower level in adult testis and salivary gland, and in the placenta.

The protein localises to the nucleus. It localises to the cytoplasm. It is found in the membrane. The protein resides in the cell membrane. Its subcellular location is the cell projection. The protein localises to the lamellipodium. It localises to the ruffle membrane. Functionally, functions as an integral cofactor in cell pH regulation by controlling plasma membrane-type Na(+)/H(+) exchange activity. Promotes the maturation, transport, cell surface stability and exchange activity of SLC9A1/NHE1 at the plasma membrane. Promotes the induction of hematopoietic stem cell differentiation toward megakaryocytic lineage. Essential for the coupling of ERK cascade activation with the expression of ETS family genes in megakaryocytic differentiation. Also involved in granulocytic differentiation in a ERK-dependent manner. Inhibits the phosphatase activity of calcineurin. This chain is Calcineurin B homologous protein 3 (TESC), found in Homo sapiens (Human).